A 71-amino-acid chain; its full sequence is Sec-independent protein translocase protein TatA (71 aa).

Residues 1 to 21 (MGSFSMGHWLIVLAIIVLLFG) traverse the membrane as a helical segment. Residues 41 to 57 (KEMEDETPVEKIEKADS) show a composition bias toward basic and acidic residues. The interval 41-71 (KEMEDETPVEKIEKADSETQSTKQNETTKNV) is disordered. The segment covering 58–71 (ETQSTKQNETTKNV) has biased composition (polar residues).

It belongs to the TatA/E family. As to quaternary structure, the Tat system comprises two distinct complexes: a TatABC complex, containing multiple copies of TatA, TatB and TatC subunits, and a separate TatA complex, containing only TatA subunits. Substrates initially bind to the TatABC complex, which probably triggers association of the separate TatA complex to form the active translocon.

It is found in the cell inner membrane. Functionally, part of the twin-arginine translocation (Tat) system that transports large folded proteins containing a characteristic twin-arginine motif in their signal peptide across membranes. TatA could form the protein-conducting channel of the Tat system. This Campylobacter fetus subsp. fetus (strain 82-40) protein is Sec-independent protein translocase protein TatA.